A 116-amino-acid chain; its full sequence is Large ribosomal subunit protein uL24c (116 aa).

The protein belongs to the universal ribosomal protein uL24 family. Part of the 50S ribosomal subunit.

It localises to the plastid. It is found in the chloroplast. Its function is as follows. One of two assembly initiator proteins, it binds directly to the 5'-end of the 23S rRNA, where it nucleates assembly of the 50S subunit. The protein is Large ribosomal subunit protein uL24c (rpl24) of Pyropia yezoensis (Susabi-nori).